Reading from the N-terminus, the 320-residue chain is MDFPGNSRFASFVRADFEYSRVEDHPLIASVLSPRKAEESAQRQSPVLVFWHGGGFVVGGRLYEPWWSEWLIEYALSQDAIIVAPDYRLLPEATGADIFDDVEAFWIWLHKSLPSLAQSNSWHAKPDLTRILCVGQSGGGSMAVHSALLHPEFNIKAIVSLYAPLYHNVPNLTVPRPRRILGTMPPPPRKAEGLIRSYIKQSKGSVRTGGDPLDMWELLLCLLQQGRLISLMNLKPDSRLDTPSLLRQVGKLPPLWLIHGEDDSVIPFKCSEMFLDELRVIAPSTSVLVSARTGEHNFDTSLTMKEDWIRNGCDFLSTHW.

Residues 52–54 (HGG) carry the Involved in the stabilization of the negatively charged intermediate by the formation of the oxyanion hole motif. Catalysis depends on residues S137 and H296.

The protein belongs to the 'GDXG' lipolytic enzyme family.

It catalyses the reaction a carboxylic ester + H2O = an alcohol + a carboxylate + H(+). It participates in secondary metabolite biosynthesis. Probable carboxylesterase; part of the gene cluster that mediates the biosynthesis of squalestatin S1 (SQS1, also known as zaragozic acid A), a heavily oxidized fungal polyketide that offers potent cholesterol lowering activity by targeting squalene synthase (SS). SQS1 is composed of a 2,8-dioxobicyclic[3.2.1]octane-3,4,5-tricarboxyclic acid core that is connected to two lipophilic polyketide arms. These initial steps feature the priming of an unusual benzoic acid starter unit onto the highly reducing polyketide synthase pks2, followed by oxaloacetate extension and product release to generate a tricarboxylic acid containing product. The phenylalanine ammonia lyase (PAL) M7 and the acyl-CoA ligase M9 are involved in transforming phenylalanine into benzoyl-CoA. The citrate synthase-like protein R3 is involved in connecting the C-alpha-carbons of the hexaketide chain and oxaloacetate to afford the tricarboxylic acid unit. The potential hydrolytic enzymes, M8 and M10, are in close proximity to pks2 and may participate in product release. On the other side, the tetraketide arm is synthesized by a the squalestatin tetraketide synthase pks1 and enzymatically esterified to the core in the last biosynthetic step, by the acetyltransferase M4. The biosynthesis of the tetraketide must involve 3 rounds of chain extension. After the first and second rounds methyl-transfer occurs, and in all rounds of extension the ketoreductase and dehydratase are active. The enoyl reductase and C-MeT of pks1 are not active in the final round of extension. The acetyltransferase M4 appears to have a broad substrate selectivity for its acyl CoA substrate, allowing the in vitro synthesis of novel squalestatins. The biosynthesis of SQS1 requires several oxidative steps likely performed by oxidoreductases M1, R1 and R2. Finally, in support of the identification of the cluster as being responsible for SQS1 production, the cluster contains a gene encoding a putative squalene synthase (SS) R6, suggesting a likely mechanism for self-resistance. The sequence is that of Probable carboxylesterase M8 from Phoma sp. (strain ATCC 20986 / MF5453).